The chain runs to 228 residues: Claudin-10 (228 aa).

A helical transmembrane segment spans residues 1-21 (MASTASEIIAFMVSISGWVLV). Topologically, residues 22-80 (SSTLPTDYWKVSTIDGTVITTATYWANLWKACVTDSTGVSNCKDFPSMLALDGYIQACR) are extracellular. A helical membrane pass occupies residues 81–101 (GLMIAAVSLGFFGSIFALFGM). The Cytoplasmic portion of the chain corresponds to 102 to 115 (KCTKVGGSDKAKAK). The helical transmembrane segment at 116–136 (IACLAGIVFILSGLCSMTGCS) threads the bilayer. The Extracellular segment spans residues 137–160 (LYANKITTEFFDPLFVEQKYELGA). A helical membrane pass occupies residues 161 to 181 (ALFIGWAGASLCIIGGVIFCF). Residues 182–228 (SISDNNKTPRYAYNGATSVMSSRTKYHGGEDFKTTNPSKQFDKNAYV) are Cytoplasmic-facing.

It belongs to the claudin family. As to quaternary structure, can form homodimers both in trans (interaction between CLDN10 molecules in opposing membranes) and in cis (interaction between CLDN10 molecules within one membrane). Interacts with CLDN19.

It is found in the cell junction. The protein resides in the tight junction. Its subcellular location is the cell membrane. It carries out the reaction Na(+)(in) = Na(+)(out). It catalyses the reaction Li(+)(in) = Li(+)(out). The catalysed reaction is K(+)(in) = K(+)(out). The enzyme catalyses Rb(+)(in) = Rb(+)(out). It carries out the reaction Cs(+)(in) = Cs(+)(out). It catalyses the reaction NH4(+)(in) = NH4(+)(out). The catalysed reaction is methylamine(out) = methylamine(in). The enzyme catalyses Mg(2+)(in) = Mg(2+)(out). It carries out the reaction Ca(2+)(in) = Ca(2+)(out). It catalyses the reaction Sr(2+)(in) = Sr(2+)(out). The catalysed reaction is chloride(in) = chloride(out). The enzyme catalyses nitrate(in) = nitrate(out). Functionally, forms paracellular channels: polymerizes in tight junction strands with cation- and anion-selective channels through the strands, conveying epithelial permeability in a process known as paracellular tight junction permeability. In sweat glands and in the thick ascending limb (TAL) of Henle's loop in kidney, it controls paracellular sodium permeability which is essential for proper sweat production and renal function. In renal proximal tubules, it conveys selective chloride over hydrogencarbonate anion permeability which is required for renal chloride reabsorption and salt homeostasis. The chain is Claudin-10 (CLDN10) from Pongo abelii (Sumatran orangutan).